Consider the following 432-residue polypeptide: FLYWCH-type zinc finger-containing protein peb-1 (432 aa).

A disordered region spans residues 1–33; it reads MLGLEKPLSSDISSSSTDTSAISPISVSSMPLS. Positions 9–26 are enriched in low complexity; the sequence is SSDISSSSTDTSAISPIS. Positions 30 to 188 form a DNA-binding region, required for DNA-binding; sequence MPLSPDKEKK…RNKEGKPRKP (159 aa). The FLYWCH-type zinc finger occupies 53–120; sequence IVTSFKGYQK…NACTKNTHNH (68 aa). The tract at residues 174 to 195 is disordered; sequence SLVSARNKEGKPRKPKSKTSTN.

The protein resides in the nucleus. Its function is as follows. Putative transcription factor. Binds to specific sequence motif 5'-[TC][AGT]TGCC[GA][AT]-3' in regulatory elements of target genes such as myosin myo-2. May modulate gene expression, perhaps acting in opposition to transcription factor pha-4. Involved in morphogenesis, perhaps especially in formation of the pharynx. Plays roles in molting, feeding and morphology. In Caenorhabditis briggsae, this protein is FLYWCH-type zinc finger-containing protein peb-1.